The chain runs to 153 residues: UPF0260 protein YcgN (153 aa).

Belongs to the UPF0260 family.

In Salmonella dublin (strain CT_02021853), this protein is UPF0260 protein YcgN.